We begin with the raw amino-acid sequence, 135 residues long: Large ribosomal subunit protein bL19 (135 aa).

It belongs to the bacterial ribosomal protein bL19 family.

Its function is as follows. This protein is located at the 30S-50S ribosomal subunit interface and may play a role in the structure and function of the aminoacyl-tRNA binding site. In Xanthomonas campestris pv. campestris (strain 8004), this protein is Large ribosomal subunit protein bL19.